The sequence spans 896 residues: Desmocollin-3 (896 aa).

An N-terminal signal peptide occupies residues 1 to 31; it reads MVVPEFRSPQCRALCTKLLLTLWVFSFVGEA. The propeptide occupies 32–135; that stretch reads CKKVTFHVPS…KETVLRRSKR (104 aa). Cadherin domains lie at 136–243, 244–355, 356–472, 473–580, and 581–691; these read RWAP…YPLF, TEAI…APTF, RQNT…GPEC, KPPE…EIIQ, and DYIV…TLGK. The Extracellular segment spans residues 136–695; it reads RWAPIPCSMQ…GITLGKWAIL (560 aa). N166 carries N-linked (GlcNAc...) asparagine glycosylation. 2 N-linked (GlcNAc...) asparagine glycosylation sites follow: N392 and N547. N630 carries N-linked (GlcNAc...) (high mannose) asparagine glycosylation. The helical transmembrane segment at 696-716 threads the bilayer; that stretch reads AILLGIALLFSVLLTLVCGVV. The Cytoplasmic portion of the chain corresponds to 717-896; it reads TARKGKHFPE…LTLAETCTKR (180 aa).

May form homodimers. Interacts with DSG1; there is evidence to suggest that the interaction promotes cell-cell adhesion of keratinocytes. In terms of tissue distribution, expressed in the basal layers of epidermal stratified epithelia from birth (at protein level).

It is found in the cell membrane. The protein localises to the cell junction. It localises to the desmosome. Its subcellular location is the cytoplasm. Functionally, a component of desmosome cell-cell junctions which are required for positive regulation of cellular adhesion. Required for cell-cell adhesion in the epidermis, as a result required for the maintenance of the dermal cohesion and the dermal barrier function. Required for cell-cell adhesion of epithelial cell layers surrounding the telogen hair club, as a result plays an important role in telogen hair shaft anchorage. Essential for successful completion of embryo compaction and development beyond the 8-cell stage. In Mus musculus (Mouse), this protein is Desmocollin-3 (Dsc3).